Consider the following 212-residue polypeptide: tRNA (guanine-N(7)-)-methyltransferase (212 aa).

Residues Glu-44, Asp-69, Asp-96, and Asp-118 each contribute to the S-adenosyl-L-methionine site. The active site involves Asp-118. Lys-122 contacts substrate. The interval 124–129 (RHEKRR) is interaction with RNA. Substrate contacts are provided by residues Asp-154 and 191-194 (TEYE).

It belongs to the class I-like SAM-binding methyltransferase superfamily. TrmB family.

It carries out the reaction guanosine(46) in tRNA + S-adenosyl-L-methionine = N(7)-methylguanosine(46) in tRNA + S-adenosyl-L-homocysteine. The protein operates within tRNA modification; N(7)-methylguanine-tRNA biosynthesis. Catalyzes the formation of N(7)-methylguanine at position 46 (m7G46) in tRNA. This is tRNA (guanine-N(7)-)-methyltransferase from Streptococcus sanguinis (strain SK36).